A 450-amino-acid chain; its full sequence is WD repeat-containing protein ATCSA-1 (450 aa).

4 WD repeats span residues 41-81, 101-141, 148-185, and 188-228; these read PHRG…DYEA, GHKY…AVVD, VYRT…FSHT, and GHRD…CFRV. The tract at residues 269-298 is disordered; the sequence is LQSKQTGSQSVKGSSSAKASVEKSRQKRIH. Residues 271 to 287 are compositionally biased toward low complexity; sequence SKQTGSQSVKGSSSAKA. WD repeat units follow at residues 310–349 and 397–436; these read AHYG…NTLV and GHYE…EDEM.

Interacts with DDB1A. As to expression, expressed in roots, leaves, stems, flowers and siliques.

It localises to the nucleus. Functionally, involved in UV-B tolerance and genome integrity. In association with DDB2, is necessary for repair of UV-B-induced DNA lesions. The chain is WD repeat-containing protein ATCSA-1 from Arabidopsis thaliana (Mouse-ear cress).